A 651-amino-acid polypeptide reads, in one-letter code: MAAAAALSGAGAPPAGGGAGGGGSPPGGWAVARLEGREFEYLMKKRSVTIGRNSSQGSVDVSMGHSSFISRRHLEIFTPPGGGHSAAAPEPAQPRPDAGGDFYLRCLGKNGVFVDGVFQRRGAPPLQLPRVCTFRFPSTNIKITFTALSSEKREKQEAPESPVKPVQPHISPLTINIPDTMAHLISPLPSPTGTISAANSCPSSPRGAGSSGYKVGRVMPSDLSLMADNSQPENEKEASGGDSPKDDSKPPYSYAQLIVQAITMAPDKQLTLNGIYTHITKNYPYYRTADKGWQNSIRHNLSLNRYFIKVPRSQEEPGKGSFWRIDPASESKLVEQAFRKRRPRGVPCFRTPLGPLSSRSAPASPNHAGVLSAHSSGAQTPESLSREGSPAPLEPEPGASQPKLAVIQEARFAQSAPGSPLSSQPVLITVQRQLPPAIKPVTYTVATPVTTPTSQPPVVQTVHVVHQIPAVSVTSVAGLAPANTYTVAGQAVVTQAAVLAPPNPEPQENGDHREVRVKVEPVPAISPATLGAASRIIQTSQGTPVQTVTIVQQAPLGQHQLPIKTVTQNGAHVVPMPTAVHSQVNNAAASPLHMLATHASASASLPTKRQNGDQAEQPELKRVKAEDGESIVIALSVDAPPAAVREKAIQN.

The segment covering 1–13 (MAAAAALSGAGAP) has biased composition (low complexity). Residues 1 to 29 (MAAAAALSGAGAPPAGGGAGGGGSPPGGW) form a disordered region. The segment covering 14 to 26 (PAGGGAGGGGSPP) has biased composition (gly residues). Phosphoserine is present on Ser24. The FHA domain occupies 48-119 (VTIGRNSSQG…NGVFVDGVFQ (72 aa)). The interval 120–162 (RRGAPPLQLPRVCTFRFPSTNIKITFTALSSEKREKQEAPESP) is required for interaction with DVL2 and SUDS3. Arg135 bears the Omega-N-methylarginine mark. 2 disordered regions span residues 150-171 (SEKR…PHIS) and 194-251 (TISA…SKPP). Residues Lys152 and Lys155 each participate in a glycyl lysine isopeptide (Lys-Gly) (interchain with G-Cter in SUMO2) cross-link. The span at 194–203 (TISAANSCPS) shows a compositional bias: polar residues. Ser230 carries the post-translational modification Phosphoserine. Basic and acidic residues predominate over residues 233 to 249 (ENEKEASGGDSPKDDSK). Positions 249 to 344 (KPPYSYAQLI…EQAFRKRRPR (96 aa)) form a DNA-binding region, fork-head. Residues 291 to 309 (KGWQNSIRHNLSLNRYFIK) are DNA-binding; major groove. The Mg(2+) site is built by Leu301, Ser302, Asn304, and Phe307. 2 DNA-binding; minor groove regions span residues 319–323 (KGSFW) and 339–344 (RKRRPR). The segment at 350 to 399 (RTPLGPLSSRSAPASPNHAGVLSAHSSGAQTPESLSREGSPAPLEPEPGA) is disordered. Position 364 is a phosphoserine (Ser364). The segment covering 373-383 (AHSSGAQTPES) has biased composition (polar residues). Phosphoserine occurs at positions 389, 415, and 419. Lys518 is covalently cross-linked (Glycyl lysine isopeptide (Lys-Gly) (interchain with G-Cter in SUMO2)). Ser590 bears the Phosphoserine mark. The span at 601-614 (ASASLPTKRQNGDQ) shows a compositional bias: polar residues. Residues 601–623 (ASASLPTKRQNGDQAEQPELKRV) are disordered. Residue Lys624 forms a Glycyl lysine isopeptide (Lys-Gly) (interchain with G-Cter in SUMO2) linkage.

In terms of assembly, component of SIN3A-, but not SIN3B-, containing multiprotein complexes. Interacts with DVL1, DVL2 (when phosphorylated) and DVL3; the interaction induces DVL2 nuclear translocation. Interacts with SUDS3. Interacts with BAP1 (when phosphorylated); leading to recruit the PR-DUB complex and repress FOXK2 target genes. Accessory component of the polycomb repressive deubiquitinase (PR-DUB) complex, at least composed of BAP1, one of ASXL1, ASXL2 or (probably) ASXL3 and one of MBD5 or MBD6. The PR-DUB core associates with a number of accessory proteins, including FOXK1, FOXK2, KDM1B, HCFC1 and OGT. Hyperphosphorylated during mitosis by CDK1 and, to a lower extent, CDK2. Phosphorylation at Ser-364 and Ser-419 affects stability by promoting degradation. As to expression, expressed in a wide range of adult brain regions, namely the piriform cortex, the major islands of Calleja and cells lining the lateral ventricles, the bed nucleus of stria terminalis, the paraventricular thalamic nucleus, habenula and all structures of the hippocampus. Also present in the hypothalamus, cerebral cortex and in the Purkinje cell layer in the cerebellum. Additionally expressed in dopamine neurons of the substantia and more sparsely in the ventral tegmental area.

The protein localises to the nucleus. The protein resides in the cytoplasm. Transcriptional regulator involved in different processes such as glucose metabolism, aerobic glycolysis and autophagy. Recognizes and binds the forkhead DNA sequence motif (5'-GTAAACA-3') and can both act as a transcription activator or repressor, depending on the context. Together with FOXK1, acts as a key regulator of metabolic reprogramming towards aerobic glycolysis, a process in which glucose is converted to lactate in the presence of oxygen. Acts by promoting expression of enzymes for glycolysis (such as hexokinase-2 (HK2), phosphofructokinase, pyruvate kinase (PKLR) and lactate dehydrogenase), while suppressing further oxidation of pyruvate in the mitochondria by up-regulating pyruvate dehydrogenase kinases PDK1 and PDK4. Probably plays a role in gluconeogenesis during overnight fasting, when lactate from white adipose tissue and muscle is the main substrate. Together with FOXK1, acts as a negative regulator of autophagy in skeletal muscle: in response to starvation, enters the nucleus, binds the promoters of autophagy genes and represses their expression, preventing proteolysis of skeletal muscle proteins. In addition to the 5'-GTAAACA-3' DNA motif, also binds the 5'-TGANTCA-3' palindromic DNA motif, and co-associates with JUN/AP-1 to activate transcription. Also able to bind to a minimal DNA heteroduplex containing a G/T-mismatch with 5'-TRT[G/T]NB-3' sequence. Binds to NFAT-like motifs (purine-rich) in the IL2 promoter. Positively regulates WNT/beta-catenin signaling by translocating DVL proteins into the nucleus. Accessory component of the polycomb repressive deubiquitinase (PR-DUB) complex; recruits the PR-DUB complex to specific FOXK2-bound genes. This is Forkhead box protein K2 from Mus musculus (Mouse).